The chain runs to 71 residues: Ceratotoxin-A (71 aa).

An N-terminal signal peptide occupies residues 1–23 (MANLKAVFLICIVAFIAFQCVVA). 2 propeptides span residues 24-35 (EPAAEDSIVVKR) and 65-71 (VAAGLVG).

As to quaternary structure, homomer of four to six subunits.

The protein resides in the secreted. Functionally, female-specific peptides with potent activity against Gram-positive and Gram-negative bacteria. They have as well hemolytic activity. This is Ceratotoxin-A (CTXA2) from Ceratitis capitata (Mediterranean fruit fly).